Reading from the N-terminus, the 86-residue chain is Large ribosomal subunit protein bL27 (86 aa).

Residues 1–10 (MAQKKGGGST) show a composition bias toward gly residues. The disordered stretch occupies residues 1–20 (MAQKKGGGSTRNGRDSESKR).

This sequence belongs to the bacterial ribosomal protein bL27 family.

The sequence is that of Large ribosomal subunit protein bL27 from Polynucleobacter necessarius subsp. necessarius (strain STIR1).